We begin with the raw amino-acid sequence, 363 residues long: 3-dehydroquinate synthase (363 aa).

Residues 109 to 113 (GATTD), 133 to 134 (TT), K146, and K155 each bind NAD(+). The Zn(2+) site is built by E188, H251, and H267.

Belongs to the sugar phosphate cyclases superfamily. Dehydroquinate synthase family. NAD(+) serves as cofactor. Requires Co(2+) as cofactor. It depends on Zn(2+) as a cofactor.

The protein localises to the cytoplasm. It carries out the reaction 7-phospho-2-dehydro-3-deoxy-D-arabino-heptonate = 3-dehydroquinate + phosphate. Its pathway is metabolic intermediate biosynthesis; chorismate biosynthesis; chorismate from D-erythrose 4-phosphate and phosphoenolpyruvate: step 2/7. In terms of biological role, catalyzes the conversion of 3-deoxy-D-arabino-heptulosonate 7-phosphate (DAHP) to dehydroquinate (DHQ). This Streptomyces avermitilis (strain ATCC 31267 / DSM 46492 / JCM 5070 / NBRC 14893 / NCIMB 12804 / NRRL 8165 / MA-4680) protein is 3-dehydroquinate synthase.